We begin with the raw amino-acid sequence, 518 residues long: Retinal dehydrogenase 2 (518 aa).

Y168 is modified (phosphotyrosine). NAD(+) is bound by residues 184-186 (IPW), 210-213 (KPAE), and 264-266 (STE). E286 functions as the Proton acceptor in the catalytic mechanism. C320 serves as the catalytic Nucleophile. S351 is modified (phosphoserine). Residues 366 to 370 (KQYNK) and E417 contribute to the NAD(+) site.

Belongs to the aldehyde dehydrogenase family. Homotetramer. In terms of tissue distribution, found in testis and less abundantly in lung, brain, heart, liver and kidney.

Its subcellular location is the cytoplasm. It carries out the reaction retinal + NAD(+) + H2O = retinoate + NADH + 2 H(+). The catalysed reaction is all-trans-retinal + NAD(+) + H2O = all-trans-retinoate + NADH + 2 H(+). It catalyses the reaction all-trans-13,14-dihydroretinal + NAD(+) + H2O = all-trans-13,14-dihydroretinoate + NADH + 2 H(+). Its pathway is cofactor metabolism; retinol metabolism. Its function is as follows. Catalyzes the NAD-dependent oxidation of aldehyde substrates, such as all-trans-retinal and all-trans-13,14-dihydroretinal, to their corresponding carboxylic acids, all-trans-retinoate and all-trans-13,14-dihydroretinoate, respectively. Retinoate signaling is critical for the transcriptional control of many genes, for instance it is crucial for initiation of meiosis in both male and female. Recognizes retinal as substrate, both in its free form and when bound to cellular retinol-binding protein. Lacks activity with benzaldehyde, acetaldehyde and octanal. Displays complete lack of activity with citral. This chain is Retinal dehydrogenase 2 (Aldh1a2), found in Rattus norvegicus (Rat).